The primary structure comprises 347 residues: GMP reductase (347 aa).

Position 108–131 (108–131 (ADFVKMQQILALSPGLKFICIDVA)) interacts with NADP(+). Residues glycine 181 and glycine 183 each contribute to the K(+) site. Catalysis depends on cysteine 186, which acts as the Thioimidate intermediate. 216–239 (IVSDGGCSVPGDVAKAFGGGADFV) lines the NADP(+) pocket.

It belongs to the IMPDH/GMPR family. GuaC type 1 subfamily. As to quaternary structure, homotetramer.

It carries out the reaction IMP + NH4(+) + NADP(+) = GMP + NADPH + 2 H(+). Functionally, catalyzes the irreversible NADPH-dependent deamination of GMP to IMP. It functions in the conversion of nucleobase, nucleoside and nucleotide derivatives of G to A nucleotides, and in maintaining the intracellular balance of A and G nucleotides. This is GMP reductase from Serratia proteamaculans (strain 568).